Consider the following 337-residue polypeptide: Alcohol dehydrogenase 1 (337 aa).

Zn(2+) contacts are provided by Cys-37, His-58, Cys-89, Cys-92, Cys-95, Cys-103, and Cys-145.

Belongs to the zinc-containing alcohol dehydrogenase family. Multimeric (with different ratios of monomers). The cofactor is Zn(2+).

It carries out the reaction a primary alcohol + NAD(+) = an aldehyde + NADH + H(+). It catalyses the reaction a secondary alcohol + NAD(+) = a ketone + NADH + H(+). It participates in alcohol metabolism; ethanol biosynthesis via fermentation pathway. Inhibited by ethanol. This chain is Alcohol dehydrogenase 1 (adhA), found in Zymomonas mobilis subsp. mobilis (strain ATCC 31821 / ZM4 / CP4).